The following is a 768-amino-acid chain: DNA ligase (768 aa).

Positions 1-11 (MSPSAPANSAP) are enriched in low complexity. Residues 1–28 (MSPSAPANSAPDPDRNGVPDVGPASAAP) form a disordered region. NAD(+) is bound by residues 62 to 66 (DAEYD), 111 to 112 (SI), and glutamate 148. The active-site N6-AMP-lysine intermediate is lysine 150. 4 residues coordinate NAD(+): arginine 171, glutamate 238, lysine 361, and lysine 385. 4 residues coordinate Zn(2+): cysteine 484, cysteine 487, cysteine 502, and cysteine 508. Residues 670-759 (AAELPLAGKT…EADADADAEG (90 aa)) form the BRCT domain.

Belongs to the NAD-dependent DNA ligase family. LigA subfamily. Requires Mg(2+) as cofactor. The cofactor is Mn(2+).

The catalysed reaction is NAD(+) + (deoxyribonucleotide)n-3'-hydroxyl + 5'-phospho-(deoxyribonucleotide)m = (deoxyribonucleotide)n+m + AMP + beta-nicotinamide D-nucleotide.. In terms of biological role, DNA ligase that catalyzes the formation of phosphodiester linkages between 5'-phosphoryl and 3'-hydroxyl groups in double-stranded DNA using NAD as a coenzyme and as the energy source for the reaction. It is essential for DNA replication and repair of damaged DNA. This chain is DNA ligase, found in Leptothrix cholodnii (strain ATCC 51168 / LMG 8142 / SP-6) (Leptothrix discophora (strain SP-6)).